Here is a 72-residue protein sequence, read N- to C-terminus: U-poneritoxin(01)-Om7a (72 aa).

A signal peptide spans 1–27 (MKPSGLTFAFLVVFMMAIMYNSVQVTA). Residues 28–45 (DADADAEAEALANALAEA) constitute a propeptide that is removed on maturation.

Belongs to the formicidae venom precursor-01 superfamily. Expressed by the venom gland.

It localises to the secreted. Its function is as follows. Peptide with unknown function that does not resemble any other pilosulin-like peptide and appears to have a coiled coil structure. This Odontomachus monticola (Trap-jaw ant) protein is U-poneritoxin(01)-Om7a.